The following is a 451-amino-acid chain: Phosphoglucosamine mutase (451 aa).

The Phosphoserine intermediate role is filled by Ser-102. Positions 102, 242, 244, and 246 each coordinate Mg(2+). Ser-102 carries the post-translational modification Phosphoserine.

It belongs to the phosphohexose mutase family. The cofactor is Mg(2+). Post-translationally, activated by phosphorylation.

It catalyses the reaction alpha-D-glucosamine 1-phosphate = D-glucosamine 6-phosphate. Catalyzes the conversion of glucosamine-6-phosphate to glucosamine-1-phosphate. In Staphylococcus aureus (strain USA300), this protein is Phosphoglucosamine mutase.